The primary structure comprises 358 residues: Protein-glutamate methylesterase/protein-glutamine glutaminase 1 (358 aa).

In terms of domain architecture, Response regulatory spans Arg8 to Glu125. Asp59 is subject to 4-aspartylphosphate. In terms of domain architecture, CheB-type methylesterase spans Pro157–Ala352. Catalysis depends on residues Ser177, His203, and Asp299.

Belongs to the CheB family. Phosphorylated by CheA. Phosphorylation of the N-terminal regulatory domain activates the methylesterase activity.

The protein resides in the cytoplasm. It catalyses the reaction [protein]-L-glutamate 5-O-methyl ester + H2O = L-glutamyl-[protein] + methanol + H(+). The enzyme catalyses L-glutaminyl-[protein] + H2O = L-glutamyl-[protein] + NH4(+). Functionally, involved in chemotaxis. Part of a chemotaxis signal transduction system that modulates chemotaxis in response to various stimuli. Catalyzes the demethylation of specific methylglutamate residues introduced into the chemoreceptors (methyl-accepting chemotaxis proteins or MCP) by CheR. Also mediates the irreversible deamidation of specific glutamine residues to glutamic acid. This Xanthomonas campestris pv. campestris (strain ATCC 33913 / DSM 3586 / NCPPB 528 / LMG 568 / P 25) protein is Protein-glutamate methylesterase/protein-glutamine glutaminase 1.